A 231-amino-acid polypeptide reads, in one-letter code: 7-cyano-7-deazaguanine synthase (231 aa).

8 to 18 (FSGGQDSTTCL) contributes to the ATP binding site. Cys188, Cys197, Cys200, and Cys203 together coordinate Zn(2+).

It belongs to the QueC family. The cofactor is Zn(2+).

It catalyses the reaction 7-carboxy-7-deazaguanine + NH4(+) + ATP = 7-cyano-7-deazaguanine + ADP + phosphate + H2O + H(+). It functions in the pathway purine metabolism; 7-cyano-7-deazaguanine biosynthesis. In terms of biological role, catalyzes the ATP-dependent conversion of 7-carboxy-7-deazaguanine (CDG) to 7-cyano-7-deazaguanine (preQ(0)). The sequence is that of 7-cyano-7-deazaguanine synthase from Salmonella agona (strain SL483).